A 290-amino-acid polypeptide reads, in one-letter code: ATP synthase gamma chain (290 aa).

This sequence belongs to the ATPase gamma chain family. As to quaternary structure, F-type ATPases have 2 components, CF(1) - the catalytic core - and CF(0) - the membrane proton channel. CF(1) has five subunits: alpha(3), beta(3), gamma(1), delta(1), epsilon(1). CF(0) has three main subunits: a, b and c.

It localises to the cell membrane. Functionally, produces ATP from ADP in the presence of a proton gradient across the membrane. The gamma chain is believed to be important in regulating ATPase activity and the flow of protons through the CF(0) complex. The sequence is that of ATP synthase gamma chain from Listeria welshimeri serovar 6b (strain ATCC 35897 / DSM 20650 / CCUG 15529 / CIP 8149 / NCTC 11857 / SLCC 5334 / V8).